A 2713-amino-acid chain; its full sequence is Histone-lysine N-methyltransferase 2B (2713 aa).

The segment covering 1 to 11 (MAAAAGGGSCP) has biased composition (gly residues). Disordered regions lie at residues 1–65 (MAAA…GEDT), 82–524 (RLWA…PTVV), and 542–783 (VSAR…ARVA). Ala2 carries the N-acetylalanine modification. The segment covering 12–24 (GPGSARGRFPGRP) has biased composition (low complexity). A Menin-binding motif (MBM) motif is present at residues 17-36 (RGRFPGRPRGSGGGGGRGGR). Composition is skewed to gly residues over residues 25–38 (RGSG…GRGN) and 49–60 (RGGGAAGPGGAE). Positions 37-44 (GNGAERVR) form a DNA-binding region, a.T hook 1. Residues 109-123 (PEEESSDGESEEEEF) show a composition bias toward acidic residues. Positions 110–117 (EEESSDGE) form a DNA-binding region, a.T hook 2. Ser113, Ser114, and Ser118 each carry phosphoserine. Basic residues predominate over residues 144–158 (QRGRAPRGRGRKHKT). The segment covering 340-360 (PQRKDGDEPERGSCRKKQEQK) has biased composition (basic and acidic residues). A DNA-binding region (a.T hook 3) is located at residues 357 to 365 (QEQKLEEEE). Residues 361-393 (LEEEEEEEEKEGEEKEEKDDNEDNNKQEEEEET) are compositionally biased toward acidic residues. A compositionally biased stretch (basic and acidic residues) spans 394–412 (ERAVAEEEAMLAKEKEEAK). Residues 414 to 460 (PSPPLTPPVPSPPPPLPPPSTSPPPPASPLPPPVSPPPPLSPPPYPA) show a composition bias toward pro residues. Low complexity predominate over residues 501–517 (GTLSPTPNPSTTTGSPL). Residues 555-566 (RFMDEDPPKPPK) are compositionally biased toward basic and acidic residues. The segment covering 577-605 (ATSPPAPQEPVPVSSPPRVPTPPSTPVPL) has biased composition (pro residues). Basic and acidic residues predominate over residues 606 to 617 (PEKRRSILREPT). Positions 627–645 (LPPPPPAPPPAPSPPPAPA) are enriched in pro residues. Low complexity-rich tracts occupy residues 646–657 (TPSRRPLLLRAP), 715–728 (VPVV…EVPP), and 738–756 (QQLQ…LLPQ). Residues 757–774 (ALPPQQPQAQPPPSPQHT) show a composition bias toward pro residues. Residue Lys810 forms a Glycyl lysine isopeptide (Lys-Gly) (interchain with G-Cter in SUMO2) linkage. Ser826, Ser849, and Ser866 each carry phosphoserine. Disordered regions lie at residues 831-872 (TEEA…QGPR) and 899-964 (SALP…HHGK). The span at 841-862 (TPDRGCVRSEDESMEAKRDRAS) shows a compositional bias: basic and acidic residues. Residues 912–922 (EDTSSASETES) are compositionally biased toward low complexity. The residue at position 941 (Ser941) is a Phosphoserine. Over residues 953-964 (TPRRSLPSHHGK) the composition is skewed to basic residues. The segment at 964-1011 (KKMRMARCGHCRGCLRVQDCGSCVNCLDKPKFGGPNTKKQCCVYRKCD) adopts a CXXC-type zinc-finger fold. Zn(2+) contacts are provided by Cys971, Cys974, Cys977, Cys983, Cys986, Cys989, Cys1005, and Cys1010. Disordered stretches follow at residues 1032 to 1076 (LLPW…DSLL) and 1088 to 1138 (QRPS…LQPV). Phosphoserine occurs at positions 1037, 1040, 1098, and 1101. A Glycyl lysine isopeptide (Lys-Gly) (interchain with G-Cter in SUMO2) cross-link involves residue Lys1142. 3 consecutive PHD-type zinc fingers follow at residues 1207–1258 (PMVC…CKFC), 1255–1309 (CKFC…CVRC), and 1341–1402 (GNYC…CAGA). The 101-residue stretch at 1410–1510 (ALSGALQGGL…GLLLKLLESA (101 aa)) folds into the Bromo domain. Positions 1550–1572 (RQQESETPESGQPPGDPSAAFQS) are disordered. Residues 1584 to 1624 (PRQCALCLKYGDADSKEAGRLLYIGQNEWTHVNCAIWSAEV) form a C2HC pre-PHD-type zinc finger. The PHD-type 4 zinc-finger motif lies at 1645 to 1692 (MRCELCLKPGATVGCCLSSCLSNFHFMCARASYCIFQDDKKVFCQKHT). The FYR N-terminal domain occupies 1733-1789 (VINVLIGSIRINSLGTLSDLSDCEGRLFPIGYQCSRLYWSTVDARRRCWYRCRILEY). Over residues 1808–1821 (QTIVHSPTPSSDTD) the composition is skewed to polar residues. 5 disordered regions span residues 1808-1973 (QTIV…GPDF), 2056-2104 (QLDG…PPED), 2116-2160 (NLGG…RTFA), 2279-2356 (VSTF…RCPL), and 2382-2408 (YSAG…PKRV). Low complexity-rich tracts occupy residues 1872-1890 (PLGG…PSSL) and 1923-1933 (RRTSSPLRTSP). A phosphoserine mark is found at Ser1926 and Ser1932. A compositionally biased stretch (polar residues) spans 1939 to 1950 (LSTSVTALTPTS). Residues 2058–2068 (DGVDDGTDSEA) show a composition bias toward acidic residues. A phosphothreonine mark is found at Thr2064 and Thr2079. Over residues 2084–2093 (PGVGRGGVLG) the composition is skewed to gly residues. A compositionally biased stretch (polar residues) spans 2140 to 2153 (NGSQPPQSLSTSPA). 2 positions are modified to phosphoserine: Ser2286 and Ser2346. An FYR C-terminal domain is found at 2409–2490 (GPHLRFEISS…QRCQHYKFRY (82 aa)). The WDR5 interaction motif (WIN) motif lies at 2506–2511 (GAARAE). Residues 2573-2689 (EAVGVYRSAI…RGEELTYDYK (117 aa)) enclose the SET domain. S-adenosyl-L-methionine is bound by residues His2583, Arg2585, Tyr2627, and 2650 to 2651 (NH). The Zn(2+) site is built by Cys2653 and Cys2701. The Post-SET domain maps to 2697-2713 (NKLPCNCGAKRCRRFLN). Asn2702 contacts S-adenosyl-L-methionine. Zn(2+)-binding residues include Cys2703 and Cys2708.

The protein belongs to the class V-like SAM-binding methyltransferase superfamily. Histone-lysine methyltransferase family. TRX/MLL subfamily. In terms of assembly, component of the menin-associated histone methyltransferase complex, at least composed of KMT2B/MLL4, ASH2L, RBBP5, WDR5, DPY30, MEN1; the complex interacts with POLR2A and POLR2B via MEN1. Interacts with NFE2. Interacts with KDM6B. Interacts (via WIN motif) with WDR5. Interacts (via MBM motif) with MEN1.

It localises to the nucleus. It carries out the reaction L-lysyl(4)-[histone H3] + S-adenosyl-L-methionine = N(6)-methyl-L-lysyl(4)-[histone H3] + S-adenosyl-L-homocysteine + H(+). The catalysed reaction is N(6)-methyl-L-lysyl(4)-[histone H3] + S-adenosyl-L-methionine = N(6),N(6)-dimethyl-L-lysyl(4)-[histone H3] + S-adenosyl-L-homocysteine + H(+). In terms of biological role, histone methyltransferase that catalyzes methyl group transfer from S-adenosyl-L-methionine to the epsilon-amino group of 'Lys-4' of histone H3 (H3K4) via a non-processive mechanism. Part of chromatin remodeling machinery predominantly forms H3K4me1 and H3K4me2 methylation marks at active chromatin sites where transcription and DNA repair take place. Likely plays a redundant role with KMT2C in enriching H3K4me1 marks on primed and active enhancer elements. Plays a central role in beta-globin locus transcription regulation by being recruited by NFE2. Plays an important role in controlling bulk H3K4me during oocyte growth and preimplantation development. Required during the transcriptionally active period of oocyte growth for the establishment and/or maintenance of bulk H3K4 trimethylation (H3K4me3), global transcriptional silencing that preceeds resumption of meiosis, oocyte survival and normal zygotic genome activation. The protein is Histone-lysine N-methyltransferase 2B (Kmt2b) of Mus musculus (Mouse).